Consider the following 127-residue polypeptide: Large ribosomal subunit protein eL8 (127 aa).

This sequence belongs to the eukaryotic ribosomal protein eL8 family. Part of the 50S ribosomal subunit. Probably part of the RNase P complex.

Its subcellular location is the cytoplasm. Its function is as follows. Multifunctional RNA-binding protein that recognizes the K-turn motif in ribosomal RNA, the RNA component of RNase P, box H/ACA, box C/D and box C'/D' sRNAs. The protein is Large ribosomal subunit protein eL8 of Picrophilus torridus (strain ATCC 700027 / DSM 9790 / JCM 10055 / NBRC 100828 / KAW 2/3).